A 131-amino-acid polypeptide reads, in one-letter code: Profilin-3 (131 aa).

This sequence belongs to the profilin family. As to quaternary structure, occurs in many kinds of cells as a complex with monomeric actin in a 1:1 ratio.

It is found in the cytoplasm. The protein localises to the cytoskeleton. Binds to actin and affects the structure of the cytoskeleton. At high concentrations, profilin prevents the polymerization of actin, whereas it enhances it at low concentrations. By binding to PIP2, it inhibits the formation of IP3 and DG. The sequence is that of Profilin-3 from Hevea brasiliensis (Para rubber tree).